Reading from the N-terminus, the 435-residue chain is Sex peptide receptor (435 aa).

Residues 1–93 (MDNYTDVLYQ…PLEYAMPLYG (93 aa)) are Extracellular-facing. The chain crosses the membrane as a helical span at residues 94–114 (YCMPFLLIITIISNSLIVLVL). Residues 115-124 (SKKSMATPTN) lie on the Cytoplasmic side of the membrane. The chain crosses the membrane as a helical span at residues 125-145 (FVLMGMAICDMLTVIFPAPGL). Over 146–168 (WYMYTFGNHYKPLHPVSMCLAYS) the chain is Extracellular. A helical transmembrane segment spans residues 169–189 (IFNEIMPAMCHTISVWLTLAL). The Cytoplasmic portion of the chain corresponds to 190–211 (AVQRYIYVCHAPMARTWCTMPR). A helical transmembrane segment spans residues 212 to 229 (VRRCTAYIALLAFLHQLP). Residues 230–276 (RFFDRTYMPLVIEWNGSPTEVCHLETSMWVHDYIGVDLYYTSYYLFR) lie on the Extracellular side of the membrane. A helical membrane pass occupies residues 277 to 297 (VLFVHLLPCIILVTLNILLFA). Residues 298-327 (AMRQAQERRKLLFRENRKKECKKLRETNCT) lie on the Cytoplasmic side of the membrane. The chain crosses the membrane as a helical span at residues 328 to 348 (TLMLIVVVSVFLLAEIPIAVV). Residues 349-368 (TAMHIVSSLIIEFLDYGLAN) are Extracellular-facing. The helical transmembrane segment at 369–389 (ICIMLTNFFLVFSYPINFGIY) threads the bilayer. Residues 390 to 435 (CGMSRQFRETFKEIFLGRLMAKKDSSTKYSIVNGARTCTNTNETVL) are Cytoplasmic-facing.

This sequence belongs to the G-protein coupled receptor 1 family. In terms of tissue distribution, in the female, expressed in the reproductive organs; strongly expressed in the spermathecae and the lower oviduct. No expression in the male reproductive organs. In the central nervous system of both sexes, it is expressed in the brain and ventral nerve cord (VNC); strongly expressed in the ventral regions of the suboesophageal ganglion, the cervical connective and in many nerve roots of the brain and VNC. Expressed in the s-LNvs and l-LNvs pdf neurons (at protein level).

It localises to the cell membrane. Functionally, receptor for two functionally unrelated ligands; SP (A70A) for controlling reproductive behaviors and MIP for controlling sleep behavior. MIP-SPR pathway functions as a sleep homeostat which perceives the need for sleep and stabilizes it by providing a slow-acting inhibitory input to the fly arousal system that involve the pigment dispersing factor (pdf) neurons. SP-SPR is one of the multiple SP pathways that induce female post-mating behavioral responses (PMR) such as the suppression of mating receptivity and initiation of egg laying. The PMR switch is achieved by mediating the synaptic output of neurons such as those expressing fruitless (fru), double sex (dsx) and pickpocket (ppk). This is Sex peptide receptor from Drosophila melanogaster (Fruit fly).